The chain runs to 740 residues: Ethylene receptor 1 (740 aa).

Transmembrane regions (helical) follow at residues 23-43 (ISDF…IYFV), 53-73 (WVLV…LINL), and 92-112 (VLTA…IPDL). Positions 65 and 69 each coordinate Cu cation. Positions 158 to 307 (DRHTILKTTL…VVADQVAVAL (150 aa)) constitute a GAF domain. The Histidine kinase domain maps to 350 to 588 (VMNHEMRTPM…TFIVKLGIAE (239 aa)). His-353 carries the post-translational modification Phosphohistidine; by autocatalysis. The 118-residue stretch at 614-731 (KVLVMDDNGV…KMRSVLSELI (118 aa)) folds into the Response regulatory domain. Asp-662 carries the 4-aspartylphosphate modification.

It belongs to the ethylene receptor family. Homodimer; disulfide-linked. The cofactor is Cu cation. Activation probably requires a transfer of a phosphate group between a His in the transmitter domain and an Asp of the receiver domain.

The protein resides in the endoplasmic reticulum membrane. The catalysed reaction is ATP + protein L-histidine = ADP + protein N-phospho-L-histidine.. Functionally, may act early in the ethylene signal transduction pathway, possibly as an ethylene receptor, or as a regulator of the pathway. In Cucumis sativus (Cucumber), this protein is Ethylene receptor 1 (ETR1).